The sequence spans 408 residues: Imidazolonepropionase (408 aa).

Fe(3+) is bound by residues histidine 73 and histidine 75. 2 residues coordinate Zn(2+): histidine 73 and histidine 75. The 4-imidazolone-5-propanoate site is built by arginine 82, tyrosine 145, and histidine 178. N-formimidoyl-L-glutamate is bound at residue tyrosine 145. Histidine 243 contacts Fe(3+). Histidine 243 lines the Zn(2+) pocket. Glutamine 246 is a binding site for 4-imidazolone-5-propanoate. Aspartate 318 contacts Fe(3+). A Zn(2+)-binding site is contributed by aspartate 318. N-formimidoyl-L-glutamate-binding residues include asparagine 320 and glycine 322. Serine 323 is a binding site for 4-imidazolone-5-propanoate.

Belongs to the metallo-dependent hydrolases superfamily. HutI family. Requires Zn(2+) as cofactor. Fe(3+) is required as a cofactor.

It localises to the cytoplasm. It catalyses the reaction 4-imidazolone-5-propanoate + H2O = N-formimidoyl-L-glutamate. The protein operates within amino-acid degradation; L-histidine degradation into L-glutamate; N-formimidoyl-L-glutamate from L-histidine: step 3/3. Its function is as follows. Catalyzes the hydrolytic cleavage of the carbon-nitrogen bond in imidazolone-5-propanoate to yield N-formimidoyl-L-glutamate. It is the third step in the universal histidine degradation pathway. The protein is Imidazolonepropionase of Shewanella sp. (strain ANA-3).